A 26-amino-acid chain; its full sequence is AMP deaminase 1 (26 aa).

The protein belongs to the metallo-dependent hydrolases superfamily. Adenosine and AMP deaminases family. In terms of assembly, homotetramer.

It catalyses the reaction AMP + H2O + H(+) = IMP + NH4(+). The protein operates within purine metabolism; IMP biosynthesis via salvage pathway; IMP from AMP: step 1/1. In terms of biological role, AMP deaminase plays a critical role in energy metabolism. The sequence is that of AMP deaminase 1 (AMPD1) from Gallus gallus (Chicken).